Consider the following 834-residue polypeptide: Protein translocase subunit SecA (834 aa).

Residues Gln-85, 103 to 107 (GEGKT), and Asp-491 each bind ATP. The tract at residues 790–809 (RETSTNINDGEGGSHEPIKR) is disordered. Zn(2+) contacts are provided by Cys-820, Cys-822, Cys-831, and Cys-832.

The protein belongs to the SecA family. In terms of assembly, monomer and homodimer. Part of the essential Sec protein translocation apparatus which comprises SecA, SecYEG and auxiliary proteins SecDF. Other proteins may also be involved. Requires Zn(2+) as cofactor.

The protein localises to the cell membrane. It is found in the cytoplasm. The enzyme catalyses ATP + H2O + cellular proteinSide 1 = ADP + phosphate + cellular proteinSide 2.. In terms of biological role, part of the Sec protein translocase complex. Interacts with the SecYEG preprotein conducting channel. Has a central role in coupling the hydrolysis of ATP to the transfer of proteins into and across the cell membrane, serving as an ATP-driven molecular motor driving the stepwise translocation of polypeptide chains across the membrane. In Clostridium novyi (strain NT), this protein is Protein translocase subunit SecA.